The sequence spans 142 residues: Transcription antitermination protein NusB (142 aa).

This sequence belongs to the NusB family.

Functionally, involved in transcription antitermination. Required for transcription of ribosomal RNA (rRNA) genes. Binds specifically to the boxA antiterminator sequence of the ribosomal RNA (rrn) operons. The protein is Transcription antitermination protein NusB of Streptomyces coelicolor (strain ATCC BAA-471 / A3(2) / M145).